A 352-amino-acid polypeptide reads, in one-letter code: UDP-3-O-acylglucosamine N-acyltransferase (352 aa).

Histidine 257 serves as the catalytic Proton acceptor.

This sequence belongs to the transferase hexapeptide repeat family. LpxD subfamily. In terms of assembly, homotrimer.

It catalyses the reaction a UDP-3-O-[(3R)-3-hydroxyacyl]-alpha-D-glucosamine + a (3R)-hydroxyacyl-[ACP] = a UDP-2-N,3-O-bis[(3R)-3-hydroxyacyl]-alpha-D-glucosamine + holo-[ACP] + H(+). Its pathway is bacterial outer membrane biogenesis; LPS lipid A biosynthesis. Catalyzes the N-acylation of UDP-3-O-acylglucosamine using 3-hydroxyacyl-ACP as the acyl donor. Is involved in the biosynthesis of lipid A, a phosphorylated glycolipid that anchors the lipopolysaccharide to the outer membrane of the cell. The sequence is that of UDP-3-O-acylglucosamine N-acyltransferase from Methylobacterium nodulans (strain LMG 21967 / CNCM I-2342 / ORS 2060).